Reading from the N-terminus, the 214-residue chain is Octanoyltransferase (214 aa).

One can recognise a BPL/LPL catalytic domain in the interval 32–207 (EDTLDEIWLV…NLLALLNHPP (176 aa)). Substrate is bound by residues 71–78 (RGGQVTYH), 138–140 (SLG), and 151–153 (GLA). The active-site Acyl-thioester intermediate is cysteine 169.

The protein belongs to the LipB family.

The protein localises to the cytoplasm. It catalyses the reaction octanoyl-[ACP] + L-lysyl-[protein] = N(6)-octanoyl-L-lysyl-[protein] + holo-[ACP] + H(+). The protein operates within protein modification; protein lipoylation via endogenous pathway; protein N(6)-(lipoyl)lysine from octanoyl-[acyl-carrier-protein]: step 1/2. Catalyzes the transfer of endogenously produced octanoic acid from octanoyl-acyl-carrier-protein onto the lipoyl domains of lipoate-dependent enzymes. Lipoyl-ACP can also act as a substrate although octanoyl-ACP is likely to be the physiological substrate. This chain is Octanoyltransferase, found in Klebsiella pneumoniae (strain 342).